We begin with the raw amino-acid sequence, 225 residues long: Protein-L-isoaspartate O-methyltransferase (225 aa).

Ser75 is an active-site residue.

This sequence belongs to the methyltransferase superfamily. L-isoaspartyl/D-aspartyl protein methyltransferase family.

Its subcellular location is the cytoplasm. It carries out the reaction [protein]-L-isoaspartate + S-adenosyl-L-methionine = [protein]-L-isoaspartate alpha-methyl ester + S-adenosyl-L-homocysteine. Its function is as follows. Catalyzes the methyl esterification of L-isoaspartyl residues in peptides and proteins that result from spontaneous decomposition of normal L-aspartyl and L-asparaginyl residues. It plays a role in the repair and/or degradation of damaged proteins. The protein is Protein-L-isoaspartate O-methyltransferase of Stenotrophomonas maltophilia (strain K279a).